Reading from the N-terminus, the 90-residue chain is Small ribosomal subunit protein bS16 (90 aa).

This sequence belongs to the bacterial ribosomal protein bS16 family.

In Streptococcus equi subsp. zooepidemicus (strain H70), this protein is Small ribosomal subunit protein bS16.